A 703-amino-acid chain; its full sequence is Pentatricopeptide repeat-containing protein At1g22830 (703 aa).

PPR repeat units lie at residues 82-116 (VLYSSASLLSTCVGFNEFVPGQQLHAHCISSGLEF), 117-147 (DSVLVPKLVTFYSAFNLLDEAQTITENSEIL), 148-182 (HPLPWNVLIGSYIRNKRFQESVSVYKRMMSKGIRA), 183-217 (DEFTYPSVIKACAALLDFAYGRVVHGSIEVSSHRC), 218-248 (NLYVCNALISMYKRFGKVDVARRLFDRMSER), 249-283 (DAVSWNAIINCYTSEEKLGEAFKLLDRMYLSGVEA), 284-318 (SIVTWNTIAGGCLEAGNYIGALNCVVGMRNCNVRI), 319-353 (GSVAMINGLKACSHIGALKWGKVFHCLVIRSCSFS), 356-386 (IDNVRNSLITMYSRCSDLRHAFIVFQQVEAN), 387-421 (SLSTWNSIISGFAYNERSEETSFLLKEMLLSGFHP), 422-452 (NHITLASILPLFARVGNLQHGKEFHCYILRR), 458-488 (CLILWNSLVDMYAKSGEIIAAKRVFDSMRKR), 489-523 (DKVTYTSLIDGYGRLGKGEVALAWFKDMDRSGIKP), 524-554 (DHVTMVAVLSACSHSNLVREGHWLFTKMEHV), and 560-594 (RLEHYSCMVDLYCRAGYLDKARDIFHTIPYEPSSA). A type E motif region spans residues 595–671 (MCATLLKACL…AHEFALMETD (77 aa)). Residues 671–703 (DSELDGENNKPMNDDSVINQEQSSDEERLVEVG) form a disordered region.

Belongs to the PPR family. PCMP-E subfamily.

The protein is Pentatricopeptide repeat-containing protein At1g22830 (PCMP-E24) of Arabidopsis thaliana (Mouse-ear cress).